Reading from the N-terminus, the 231-residue chain is WAP four-disulfide core domain protein 3 (231 aa).

An N-terminal signal peptide occupies residues 1–24; the sequence is MMLSCLFLLKALLALGSLESWITA. WAP domains follow at residues 26 to 68, 69 to 114, 119 to 162, and 163 to 207; these read EHAK…CRDI, PKGR…VVPI, LAEF…LGDI, and EGGR…VPPV. Disulfide bonds link Cys33–Cys57, Cys40–Cys61, Cys44–Cys56, Cys50–Cys65, Cys76–Cys102, Cys85–Cys106, Cys89–Cys101, Cys95–Cys110, Cys126–Cys150, Cys133–Cys154, Cys137–Cys149, Cys143–Cys158, Cys170–Cys195, Cys178–Cys199, Cys182–Cys194, and Cys188–Cys203. Asn107 carries an N-linked (GlcNAc...) asparagine glycan. Residue Asn217 is glycosylated (N-linked (GlcNAc...) asparagine).

In terms of tissue distribution, ubiquitously expressed.

Its subcellular location is the secreted. The protein is WAP four-disulfide core domain protein 3 (WFDC3) of Homo sapiens (Human).